We begin with the raw amino-acid sequence, 244 residues long: tRNA1(Val) (adenine(37)-N6)-methyltransferase (244 aa).

This sequence belongs to the methyltransferase superfamily. tRNA (adenine-N(6)-)-methyltransferase family.

The protein resides in the cytoplasm. The catalysed reaction is adenosine(37) in tRNA1(Val) + S-adenosyl-L-methionine = N(6)-methyladenosine(37) in tRNA1(Val) + S-adenosyl-L-homocysteine + H(+). In terms of biological role, specifically methylates the adenine in position 37 of tRNA(1)(Val) (anticodon cmo5UAC). This is tRNA1(Val) (adenine(37)-N6)-methyltransferase from Shewanella sediminis (strain HAW-EB3).